The primary structure comprises 197 residues: Imidazoleglycerol-phosphate dehydratase (197 aa).

This sequence belongs to the imidazoleglycerol-phosphate dehydratase family.

The protein resides in the cytoplasm. The enzyme catalyses D-erythro-1-(imidazol-4-yl)glycerol 3-phosphate = 3-(imidazol-4-yl)-2-oxopropyl phosphate + H2O. Its pathway is amino-acid biosynthesis; L-histidine biosynthesis; L-histidine from 5-phospho-alpha-D-ribose 1-diphosphate: step 6/9. In Saccharophagus degradans (strain 2-40 / ATCC 43961 / DSM 17024), this protein is Imidazoleglycerol-phosphate dehydratase.